Reading from the N-terminus, the 197-residue chain is Nucleoside triphosphate pyrophosphatase (197 aa).

The Proton acceptor role is filled by Asp-71.

This sequence belongs to the Maf family. It depends on a divalent metal cation as a cofactor.

The protein resides in the cytoplasm. The catalysed reaction is a ribonucleoside 5'-triphosphate + H2O = a ribonucleoside 5'-phosphate + diphosphate + H(+). The enzyme catalyses a 2'-deoxyribonucleoside 5'-triphosphate + H2O = a 2'-deoxyribonucleoside 5'-phosphate + diphosphate + H(+). Functionally, nucleoside triphosphate pyrophosphatase. May have a dual role in cell division arrest and in preventing the incorporation of modified nucleotides into cellular nucleic acids. The protein is Nucleoside triphosphate pyrophosphatase of Nostoc punctiforme (strain ATCC 29133 / PCC 73102).